A 94-amino-acid chain; its full sequence is Pyrimidine/purine nucleoside phosphorylase (94 aa).

This sequence belongs to the nucleoside phosphorylase PpnP family.

It carries out the reaction a purine D-ribonucleoside + phosphate = a purine nucleobase + alpha-D-ribose 1-phosphate. The enzyme catalyses adenosine + phosphate = alpha-D-ribose 1-phosphate + adenine. It catalyses the reaction cytidine + phosphate = cytosine + alpha-D-ribose 1-phosphate. The catalysed reaction is guanosine + phosphate = alpha-D-ribose 1-phosphate + guanine. It carries out the reaction inosine + phosphate = alpha-D-ribose 1-phosphate + hypoxanthine. The enzyme catalyses thymidine + phosphate = 2-deoxy-alpha-D-ribose 1-phosphate + thymine. It catalyses the reaction uridine + phosphate = alpha-D-ribose 1-phosphate + uracil. The catalysed reaction is xanthosine + phosphate = alpha-D-ribose 1-phosphate + xanthine. In terms of biological role, catalyzes the phosphorolysis of diverse nucleosides, yielding D-ribose 1-phosphate and the respective free bases. Can use uridine, adenosine, guanosine, cytidine, thymidine, inosine and xanthosine as substrates. Also catalyzes the reverse reactions. The polypeptide is Pyrimidine/purine nucleoside phosphorylase (Teredinibacter turnerae (strain ATCC 39867 / T7901)).